Here is a 246-residue protein sequence, read N- to C-terminus: 1-(5-phosphoribosyl)-5-[(5-phosphoribosylamino)methylideneamino] imidazole-4-carboxamide isomerase (246 aa).

The active-site Proton acceptor is aspartate 10.

This sequence belongs to the HisA/HisF family.

Its subcellular location is the cytoplasm. It carries out the reaction 1-(5-phospho-beta-D-ribosyl)-5-[(5-phospho-beta-D-ribosylamino)methylideneamino]imidazole-4-carboxamide = 5-[(5-phospho-1-deoxy-D-ribulos-1-ylimino)methylamino]-1-(5-phospho-beta-D-ribosyl)imidazole-4-carboxamide. It participates in amino-acid biosynthesis; L-histidine biosynthesis; L-histidine from 5-phospho-alpha-D-ribose 1-diphosphate: step 4/9. This Corynebacterium efficiens (strain DSM 44549 / YS-314 / AJ 12310 / JCM 11189 / NBRC 100395) protein is 1-(5-phosphoribosyl)-5-[(5-phosphoribosylamino)methylideneamino] imidazole-4-carboxamide isomerase.